The following is a 469-amino-acid chain: Nuclear hormone receptor family member nhr-154 (469 aa).

The segment at residues proline 80 to alanine 159 is a DNA-binding region (nuclear receptor). 2 NR C4-type zinc fingers span residues cysteine 83 to cysteine 103 and cysteine 119 to cysteine 142. An NR LBD domain is found at leucine 230 to isoleucine 459.

The protein belongs to the nuclear hormone receptor family.

It localises to the nucleus. Orphan nuclear receptor. This is Nuclear hormone receptor family member nhr-154 (nhr-154) from Caenorhabditis elegans.